The chain runs to 400 residues: Tryptophan synthase beta chain (400 aa).

Lys92 is subject to N6-(pyridoxal phosphate)lysine.

The protein belongs to the TrpB family. Tetramer of two alpha and two beta chains. Requires pyridoxal 5'-phosphate as cofactor.

It carries out the reaction (1S,2R)-1-C-(indol-3-yl)glycerol 3-phosphate + L-serine = D-glyceraldehyde 3-phosphate + L-tryptophan + H2O. The protein operates within amino-acid biosynthesis; L-tryptophan biosynthesis; L-tryptophan from chorismate: step 5/5. Functionally, the beta subunit is responsible for the synthesis of L-tryptophan from indole and L-serine. The polypeptide is Tryptophan synthase beta chain (Neisseria meningitidis serogroup B (strain ATCC BAA-335 / MC58)).